The following is a 382-amino-acid chain: Dual-specificity RNA methyltransferase RlmN (382 aa).

E113 functions as the Proton acceptor in the catalytic mechanism. One can recognise a Radical SAM core domain in the interval 119–358 (EINRATLCIS…TTIRKQRGID (240 aa)). An intrachain disulfide couples C126 to C363. Residues C133, C137, and C140 each contribute to the [4Fe-4S] cluster site. S-adenosyl-L-methionine is bound by residues 187–188 (GE), S219, 241–243 (SLH), and N320. The active-site S-methylcysteine intermediate is C363.

It belongs to the radical SAM superfamily. RlmN family. It depends on [4Fe-4S] cluster as a cofactor.

Its subcellular location is the cytoplasm. The catalysed reaction is adenosine(2503) in 23S rRNA + 2 reduced [2Fe-2S]-[ferredoxin] + 2 S-adenosyl-L-methionine = 2-methyladenosine(2503) in 23S rRNA + 5'-deoxyadenosine + L-methionine + 2 oxidized [2Fe-2S]-[ferredoxin] + S-adenosyl-L-homocysteine. It carries out the reaction adenosine(37) in tRNA + 2 reduced [2Fe-2S]-[ferredoxin] + 2 S-adenosyl-L-methionine = 2-methyladenosine(37) in tRNA + 5'-deoxyadenosine + L-methionine + 2 oxidized [2Fe-2S]-[ferredoxin] + S-adenosyl-L-homocysteine. In terms of biological role, specifically methylates position 2 of adenine 2503 in 23S rRNA and position 2 of adenine 37 in tRNAs. m2A2503 modification seems to play a crucial role in the proofreading step occurring at the peptidyl transferase center and thus would serve to optimize ribosomal fidelity. This chain is Dual-specificity RNA methyltransferase RlmN, found in Wigglesworthia glossinidia brevipalpis.